The chain runs to 324 residues: NADH-ubiquinone oxidoreductase chain 1 (324 aa).

8 helical membrane-spanning segments follow: residues 10–30 (MIMTLSYMIPILIAVAFLTLV), 76–96 (FLFILTPILALLLALTIWTPL), 107–127 (LGLLFLLAMSSLTVYSLLWSG), 143–163 (VAQTISYEVTLAIILLSTIML), 178–198 (PMYLIFSSWPLTMMWYISTLA), 229–249 (LFFLAEYANIMLMNTLTITLF), 260–280 (ELFSITLATKVLLLSSSFLWI), and 300–320 (FLPLTLAMCLWHTSMPISYAG).

Belongs to the complex I subunit 1 family.

It localises to the mitochondrion inner membrane. The enzyme catalyses a ubiquinone + NADH + 5 H(+)(in) = a ubiquinol + NAD(+) + 4 H(+)(out). Its function is as follows. Core subunit of the mitochondrial membrane respiratory chain NADH dehydrogenase (Complex I) that is believed to belong to the minimal assembly required for catalysis. Complex I functions in the transfer of electrons from NADH to the respiratory chain. The immediate electron acceptor for the enzyme is believed to be ubiquinone. In Coturnix japonica (Japanese quail), this protein is NADH-ubiquinone oxidoreductase chain 1 (MT-ND1).